The chain runs to 341 residues: Two-component response regulator EHD1 (341 aa).

The region spanning 12–127 (RVLVIDDDCS…ELSNIWQHIF (116 aa)) is the Response regulatory domain. At Asp63 the chain carries 4-aspartylphosphate. Positions 195–254 (DLGKSRLTWTTQLHRQFIAAVNHLGEDKAVPKKILGIMKVKHLTREQVASHLQKYRMQLK) constitute an HTH myb-type domain. Residues 225-250 (PKKILGIMKVKHLTREQVASHLQKYR) constitute a DNA-binding region (H-T-H motif).

Two-component system major event consists of a His-to-Asp phosphorelay between a sensor histidine kinase (HK) and a response regulator (RR). In plants, the His-to-Asp phosphorelay involves an additional intermediate named Histidine-containing phosphotransfer protein (HPt). This multistep phosphorelay consists of a His-Asp-His-Asp sequential transfer of a phosphate group between first a His and an Asp of the HK protein, followed by the transfer to a conserved His of the HPt protein and finally the transfer to an Asp in the receiver domain of the RR protein.

The protein localises to the nucleus. Transcriptional activator that acts as a floral inducer to promote short-day (SD) flowering pathway. Activates Hd3a and other FT-like genes independently from Hd1. May also activate MADS-box transcription factors involved in flowering regulation. The protein is Two-component response regulator EHD1 (EHD1) of Oryza sativa subsp. indica (Rice).